The chain runs to 177 residues: Ribosome rescue factor SmrB (177 aa).

Residues 22 to 45 (SKKLRQDTIIHQPSKNFSEQQKQR) form a disordered region. The span at 30–41 (IIHQPSKNFSEQ) shows a compositional bias: polar residues. Residues 98–173 (LDMHGMKQDE…GAGAILVLLS (76 aa)) enclose the Smr domain.

The protein belongs to the SmrB family. Associates with collided ribosomes, but not with correctly translating polysomes.

In terms of biological role, acts as a ribosome collision sensor. Detects stalled/collided disomes (pairs of ribosomes where the leading ribosome is stalled and a second ribosome has collided with it) and endonucleolytically cleaves mRNA at the 5' boundary of the stalled ribosome. Stalled/collided disomes form a new interface (primarily via the 30S subunits) that binds SmrB. Cleaved mRNA becomes available for tmRNA ligation, leading to ribosomal subunit dissociation and rescue of stalled ribosomes. This is Ribosome rescue factor SmrB from Aliivibrio salmonicida (strain LFI1238) (Vibrio salmonicida (strain LFI1238)).